The following is a 322-amino-acid chain: Pantothenate kinase (322 aa).

104-111 (GSVAVGKS) is a binding site for ATP.

This sequence belongs to the prokaryotic pantothenate kinase family.

Its subcellular location is the cytoplasm. The catalysed reaction is (R)-pantothenate + ATP = (R)-4'-phosphopantothenate + ADP + H(+). Its pathway is cofactor biosynthesis; coenzyme A biosynthesis; CoA from (R)-pantothenate: step 1/5. The polypeptide is Pantothenate kinase (Leifsonia xyli subsp. xyli (strain CTCB07)).